A 126-amino-acid chain; its full sequence is MAILGLGTDIVEIARIESVIARSGERLARRVLSDNEWEIWKTHHQPVRFLAKRFAVKEAAAKAFGTGIRNGLAFNQFEVFNDELGKPRLRLWGEALKLAEKLGVVNMHVTLADERHYACATVIIES.

Positions 9 and 58 each coordinate Mg(2+).

Belongs to the P-Pant transferase superfamily. AcpS family. The cofactor is Mg(2+).

Its subcellular location is the cytoplasm. It carries out the reaction apo-[ACP] + CoA = holo-[ACP] + adenosine 3',5'-bisphosphate + H(+). Transfers the 4'-phosphopantetheine moiety from coenzyme A to a Ser of acyl-carrier-protein. The chain is Holo-[acyl-carrier-protein] synthase from Escherichia fergusonii (strain ATCC 35469 / DSM 13698 / CCUG 18766 / IAM 14443 / JCM 21226 / LMG 7866 / NBRC 102419 / NCTC 12128 / CDC 0568-73).